The following is a 360-amino-acid chain: Serine/threonine-protein kinase SRK2H (360 aa).

Residues 4 to 260 (YEVVKDLGAG…LKEIKKHPWY (257 aa)) enclose the Protein kinase domain. ATP is bound by residues 10 to 18 (LGAGNFGVA) and Lys-33. Residue Asp-123 is the Proton acceptor of the active site. The disordered stretch occupies residues 298–360 (EARNPAPSSN…AHSCQEPPKA (63 aa)). Residues 313 to 343 (DDDEEDVEDEVEEEEEEEEEEEEEEEEEEDE) show a composition bias toward acidic residues. Over residues 344–360 (YEKHVKEAHSCQEPPKA) the composition is skewed to basic and acidic residues.

The protein belongs to the protein kinase superfamily. Ser/Thr protein kinase family. In terms of tissue distribution, expressed in seedlings.

It carries out the reaction L-seryl-[protein] + ATP = O-phospho-L-seryl-[protein] + ADP + H(+). The enzyme catalyses L-threonyl-[protein] + ATP = O-phospho-L-threonyl-[protein] + ADP + H(+). This is Serine/threonine-protein kinase SRK2H (SRK2H) from Arabidopsis thaliana (Mouse-ear cress).